The sequence spans 256 residues: Ras-related protein RabJ (256 aa).

Residue 16–23 participates in GTP binding; sequence GSSDVGKT. The short motif at 38-46 is the Effector region element; it reads LTSTIGASF. GTP is bound by residues 64–68 and 122–125; these read DSAGQ and NKID. Residues 229–256 form a disordered region; that stretch reads NGHLQGSINGHNNQNSTNYSDNSDQCCG. Polar residues predominate over residues 230–256; sequence GHLQGSINGHNNQNSTNYSDNSDQCCG. S-geranylgeranyl cysteine attachment occurs at residues Cys-254 and Cys-255.

The protein belongs to the small GTPase superfamily. Rab family.

Its subcellular location is the cell membrane. In Dictyostelium discoideum (Social amoeba), this protein is Ras-related protein RabJ (rabJ).